Here is a 161-residue protein sequence, read N- to C-terminus: Assembly protein P7 (161 aa).

Homodimer. Part of the packaging complex composed of RDRP, P4 and P7. Interacts with RDRP.

The protein resides in the virion. In terms of biological role, assembly protein part of the packaging complex that packages the viral RNA segments, replicate them into a double-stranded form and transcribe them. Required for efficient procapsid assembly. Necessary for stable packaging. May stabilize the RNA-dependent RNA polymerase (RdRP) in its position at the three-fold axis on the inner side of empty-unexpanded procapsids. Could play a role in viral RNA recognition. Seems to be involved in the regulation of plus strand synthesis (transcription) as a fidelity factor. The sequence is that of Assembly protein P7 (P7) from Pseudomonas phage phi6 (Bacteriophage phi-6).